Here is a 151-residue protein sequence, read N- to C-terminus: SsrA-binding protein (151 aa).

A disordered region spans residues 132 to 151; it reads KRQTIKKRDQDREIHRKYGI.

Belongs to the SmpB family.

It is found in the cytoplasm. Functionally, required for rescue of stalled ribosomes mediated by trans-translation. Binds to transfer-messenger RNA (tmRNA), required for stable association of tmRNA with ribosomes. tmRNA and SmpB together mimic tRNA shape, replacing the anticodon stem-loop with SmpB. tmRNA is encoded by the ssrA gene; the 2 termini fold to resemble tRNA(Ala) and it encodes a 'tag peptide', a short internal open reading frame. During trans-translation Ala-aminoacylated tmRNA acts like a tRNA, entering the A-site of stalled ribosomes, displacing the stalled mRNA. The ribosome then switches to translate the ORF on the tmRNA; the nascent peptide is terminated with the 'tag peptide' encoded by the tmRNA and targeted for degradation. The ribosome is freed to recommence translation, which seems to be the essential function of trans-translation. The polypeptide is SsrA-binding protein (Lactobacillus johnsonii (strain CNCM I-12250 / La1 / NCC 533)).